A 242-amino-acid chain; its full sequence is Glucosamine-6-phosphate deaminase (242 aa).

Residue Asp-67 is the Proton acceptor; for enolization step of the active site. Asn-136 (for ring-opening step) is an active-site residue. The Proton acceptor; for ring-opening step role is filled by His-138. The active-site For ring-opening step is Glu-143.

The protein belongs to the glucosamine/galactosamine-6-phosphate isomerase family. NagB subfamily.

It carries out the reaction alpha-D-glucosamine 6-phosphate + H2O = beta-D-fructose 6-phosphate + NH4(+). The protein operates within amino-sugar metabolism; N-acetylneuraminate degradation; D-fructose 6-phosphate from N-acetylneuraminate: step 5/5. In terms of biological role, catalyzes the reversible isomerization-deamination of glucosamine 6-phosphate (GlcN6P) to form fructose 6-phosphate (Fru6P) and ammonium ion. The polypeptide is Glucosamine-6-phosphate deaminase (Clostridium perfringens (strain ATCC 13124 / DSM 756 / JCM 1290 / NCIMB 6125 / NCTC 8237 / Type A)).